The chain runs to 1295 residues: DNA-directed RNA polymerase subunit beta' (1295 aa).

Zn(2+)-binding residues include Cys-66, Cys-68, Cys-81, and Cys-84. 3 residues coordinate Mg(2+): Asp-562, Asp-564, and Asp-566. Cys-901, Cys-975, Cys-982, and Cys-985 together coordinate Zn(2+).

The protein belongs to the RNA polymerase beta' chain family. The RNAP catalytic core consists of 2 alpha, 1 beta, 1 beta' and 1 omega subunit. When a sigma factor is associated with the core the holoenzyme is formed, which can initiate transcription. Requires Mg(2+) as cofactor. Zn(2+) is required as a cofactor.

The enzyme catalyses RNA(n) + a ribonucleoside 5'-triphosphate = RNA(n+1) + diphosphate. Functionally, DNA-dependent RNA polymerase catalyzes the transcription of DNA into RNA using the four ribonucleoside triphosphates as substrates. This chain is DNA-directed RNA polymerase subunit beta', found in Rubrobacter xylanophilus (strain DSM 9941 / JCM 11954 / NBRC 16129 / PRD-1).